A 605-amino-acid polypeptide reads, in one-letter code: Dolichyl-diphosphooligosaccharide--protein glycosyltransferase subunit 1 (605 aa).

A signal peptide spans 1–22 (MEAPIVLLLLLWLALAPTPGSA). Residues 23 to 437 (SSEAPPLVNE…FNKVLMLQEP (415 aa)) lie on the Lumenal side of the membrane. At Lys185 the chain carries N6-acetyllysine. N-linked (GlcNAc...) asparagine glycosylation occurs at Asn297. A helical transmembrane segment spans residues 438–455 (LLVVAAFYILFFTVIIYV). The Cytoplasmic segment spans residues 456 to 605 (RLDFSITKDP…TKIDHILDAL (150 aa)). N6-acetyllysine; alternate is present on Lys536. Residue Lys536 forms a Glycyl lysine isopeptide (Lys-Gly) (interchain with G-Cter in SUMO2); alternate linkage.

It belongs to the OST1 family. In terms of assembly, component of the oligosaccharyltransferase (OST) complex. OST exists in two different complex forms which contain common core subunits RPN1, RPN2, OST48, OST4, DAD1 and TMEM258, either STT3A or STT3B as catalytic subunits, and form-specific accessory subunits. STT3A complex assembly occurs through the formation of 3 subcomplexes. Subcomplex 1 contains RPN1 and TMEM258, subcomplex 2 contains the STT3A-specific subunits STT3A, DC2/OSTC, and KCP2 as well as the core subunit OST4, and subcomplex 3 contains RPN2, DAD1, and OST48. The STT3A complex can form stable complexes with the Sec61 complex or with both the Sec61 and TRAP complexes. Interacts with TMEM35A/NACHO. Ubiquitinated by the ECS(ASB11) complex. In terms of processing, ufmylated by UFL1 in response to endoplasmic reticulum stress, promoting reticulophagy of endoplasmic reticulum sheets. In terms of tissue distribution, expressed in all tissues tested.

The protein localises to the endoplasmic reticulum membrane. It participates in protein modification; protein glycosylation. Subunit of the oligosaccharyl transferase (OST) complex that catalyzes the initial transfer of a defined glycan (Glc(3)Man(9)GlcNAc(2) in eukaryotes) from the lipid carrier dolichol-pyrophosphate to an asparagine residue within an Asn-X-Ser/Thr consensus motif in nascent polypeptide chains, the first step in protein N-glycosylation. N-glycosylation occurs cotranslationally and the complex associates with the Sec61 complex at the channel-forming translocon complex that mediates protein translocation across the endoplasmic reticulum (ER). All subunits are required for a maximal enzyme activity. The protein is Dolichyl-diphosphooligosaccharide--protein glycosyltransferase subunit 1 of Rattus norvegicus (Rat).